The following is a 229-amino-acid chain: NAD(P)H-quinone oxidoreductase subunit K, chloroplastic (229 aa).

4 residues coordinate [4Fe-4S] cluster: C43, C44, C108, and C139.

It belongs to the complex I 20 kDa subunit family. NDH is composed of at least 16 different subunits, 5 of which are encoded in the nucleus. [4Fe-4S] cluster serves as cofactor.

It is found in the plastid. Its subcellular location is the chloroplast thylakoid membrane. It carries out the reaction a plastoquinone + NADH + (n+1) H(+)(in) = a plastoquinol + NAD(+) + n H(+)(out). The enzyme catalyses a plastoquinone + NADPH + (n+1) H(+)(in) = a plastoquinol + NADP(+) + n H(+)(out). NDH shuttles electrons from NAD(P)H:plastoquinone, via FMN and iron-sulfur (Fe-S) centers, to quinones in the photosynthetic chain and possibly in a chloroplast respiratory chain. The immediate electron acceptor for the enzyme in this species is believed to be plastoquinone. Couples the redox reaction to proton translocation, and thus conserves the redox energy in a proton gradient. The protein is NAD(P)H-quinone oxidoreductase subunit K, chloroplastic of Coffea arabica (Arabian coffee).